Reading from the N-terminus, the 205-residue chain is Glycerol-3-phosphate acyltransferase (205 aa).

The next 5 helical transmembrane spans lie at 13–33 (LLALAALIGYLLGSIPFGLIL), 68–88 (LLLDALKGTAAVLVANALWGY), 90–110 (ASLVAGFFAFLGHLFPVWLGF), 120–140 (IGVLLGAAPLMMLAFALIWLA), and 147–167 (YSSLSALLAMLIIPVALWVLG).

Belongs to the PlsY family. As to quaternary structure, probably interacts with PlsX.

Its subcellular location is the cell inner membrane. It catalyses the reaction an acyl phosphate + sn-glycerol 3-phosphate = a 1-acyl-sn-glycero-3-phosphate + phosphate. Its pathway is lipid metabolism; phospholipid metabolism. In terms of biological role, catalyzes the transfer of an acyl group from acyl-phosphate (acyl-PO(4)) to glycerol-3-phosphate (G3P) to form lysophosphatidic acid (LPA). This enzyme utilizes acyl-phosphate as fatty acyl donor, but not acyl-CoA or acyl-ACP. The chain is Glycerol-3-phosphate acyltransferase from Agrobacterium fabrum (strain C58 / ATCC 33970) (Agrobacterium tumefaciens (strain C58)).